A 236-amino-acid chain; its full sequence is Thiamine import ATP-binding protein ThiQ (236 aa).

The 229-residue stretch at 2-230 (LKLEKITYLY…SAAKASVLGI (229 aa)) folds into the ABC transporter domain. 32–39 (GPSGAGKS) provides a ligand contact to ATP.

Belongs to the ABC transporter superfamily. Thiamine importer (TC 3.A.1.19.1) family. The complex is composed of two ATP-binding proteins (ThiQ), two transmembrane proteins (ThiP) and a solute-binding protein (ThiB).

It localises to the cell inner membrane. It catalyses the reaction thiamine(out) + ATP + H2O = thiamine(in) + ADP + phosphate + H(+). In terms of biological role, part of the ABC transporter complex ThiBPQ involved in thiamine import. Responsible for energy coupling to the transport system. The polypeptide is Thiamine import ATP-binding protein ThiQ (Yersinia pseudotuberculosis serotype I (strain IP32953)).